A 563-amino-acid polypeptide reads, in one-letter code: (R)-mandelonitrile lyase 1 (563 aa).

The N-terminal stretch at 1 to 27 (MEKSTMSAILLVLHLFVLLLQYSEVHS) is a signal peptide. Residues 63–64 (TS), 82–83 (ER), V129, T133, and 137–140 (NAGV) contribute to the FAD site. N145 and N162 each carry an N-linked (GlcNAc...) asparagine glycan. Residue V244 participates in FAD binding. C355 serves as a coordination point for substrate. Residue N379 is glycosylated (N-linked (GlcNAc...) asparagine). C426 and C477 are joined by a disulfide. Y484 serves as a coordination point for substrate. FAD-binding positions include 485–486 (WH) and G514. The Proton donor role is filled by H486. H524 functions as the Proton acceptor in the catalytic mechanism. 525–526 (PQ) contributes to the FAD binding site.

It belongs to the GMC oxidoreductase family. In terms of assembly, monomer. FAD is required as a cofactor. Post-translationally, glycosylated. In terms of tissue distribution, seeds. Localized within cotyledonary parenchyma cells.

It localises to the vacuole. The protein resides in the aleurone grain. It carries out the reaction (R)-mandelonitrile = benzaldehyde + hydrogen cyanide. Involved in cyanogenesis, the release of HCN from injured tissues. Catalyzes the stereospecific addition of HCN to a variety of aldehydes in vitro. It is a major seed constituent, and could have the additional role of a storage form for reduced nitrogen. The sequence is that of (R)-mandelonitrile lyase 1 (MDL1) from Prunus serotina (Black cherry).